Consider the following 109-residue polypeptide: Thioredoxin-like protein slr1139 (109 aa).

The Thioredoxin domain occupies 2 to 107 (SLLEITDAEF…LLELLKEELD (106 aa)). Residues Cys31 and Cys34 are joined by a disulfide bond.

Belongs to the thioredoxin family.

This chain is Thioredoxin-like protein slr1139, found in Synechocystis sp. (strain ATCC 27184 / PCC 6803 / Kazusa).